Reading from the N-terminus, the 545-residue chain is Cytosolic Fe-S cluster assembly factor NAR1 (545 aa).

Positions 20, 74, 77, 80, 188, 243, 454, and 458 each coordinate [4Fe-4S] cluster.

Belongs to the NARF family.

In terms of biological role, component of the cytosolic Fe/S protein assembly machinery. Required for maturation of extramitochondrial Fe/S proteins. May play a role in the transfer of pre-assembled Fe/S clusters to target apoproteins. The polypeptide is Cytosolic Fe-S cluster assembly factor NAR1 (NAR1) (Scheffersomyces stipitis (strain ATCC 58785 / CBS 6054 / NBRC 10063 / NRRL Y-11545) (Yeast)).